The following is an 80-amino-acid chain: Probable small nuclear ribonucleoprotein G (80 aa).

The region spanning 5-76 (GQPPDLKKYM…IVTVEALEPV (72 aa)) is the Sm domain.

The protein belongs to the snRNP Sm proteins family.

Its subcellular location is the nucleus. In terms of biological role, probable common Sm protein, is found in U1 and U2 snRNPs and may be part of the spliceosome. The polypeptide is Probable small nuclear ribonucleoprotein G (Arabidopsis thaliana (Mouse-ear cress)).